The following is a 158-amino-acid chain: Protein OPG060 (158 aa).

It belongs to the orthopoxvirus OPG058 family.

The polypeptide is Protein OPG060 (OPG060) (Homo sapiens (Human)).